A 242-amino-acid chain; its full sequence is Pyridoxine 5'-phosphate synthase (242 aa).

3-amino-2-oxopropyl phosphate is bound at residue Asn-9. 11 to 12 contacts 1-deoxy-D-xylulose 5-phosphate; that stretch reads DH. Arg-20 lines the 3-amino-2-oxopropyl phosphate pocket. His-45 acts as the Proton acceptor in catalysis. 2 residues coordinate 1-deoxy-D-xylulose 5-phosphate: Arg-47 and His-52. The Proton acceptor role is filled by Glu-72. Thr-102 contributes to the 1-deoxy-D-xylulose 5-phosphate binding site. His-193 functions as the Proton donor in the catalytic mechanism. 3-amino-2-oxopropyl phosphate contacts are provided by residues Gly-194 and 215–216; that span reads GH.

It belongs to the PNP synthase family. In terms of assembly, homooctamer; tetramer of dimers.

It localises to the cytoplasm. The catalysed reaction is 3-amino-2-oxopropyl phosphate + 1-deoxy-D-xylulose 5-phosphate = pyridoxine 5'-phosphate + phosphate + 2 H2O + H(+). Its pathway is cofactor biosynthesis; pyridoxine 5'-phosphate biosynthesis; pyridoxine 5'-phosphate from D-erythrose 4-phosphate: step 5/5. Its function is as follows. Catalyzes the complicated ring closure reaction between the two acyclic compounds 1-deoxy-D-xylulose-5-phosphate (DXP) and 3-amino-2-oxopropyl phosphate (1-amino-acetone-3-phosphate or AAP) to form pyridoxine 5'-phosphate (PNP) and inorganic phosphate. In Idiomarina loihiensis (strain ATCC BAA-735 / DSM 15497 / L2-TR), this protein is Pyridoxine 5'-phosphate synthase.